The primary structure comprises 468 residues: Tapasin-related protein (468 aa).

An N-terminal signal peptide occupies residues 1–18 (MGTQEGWCLLLCLALSGA). Over 19 to 405 (AETKPHPAER…STQVVPPERR (387 aa)) the chain is Lumenal. One can recognise an Ig-like V-type domain in the interval 181-297 (PQGTVRTAVE…SLYRAQQIIQ (117 aa)). 2 disulfides stabilise this stretch: Cys-212–Cys-283 and Cys-321–Cys-382. A glycan (N-linked (GlcNAc...) asparagine) is linked at Asn-265. Residues 304-394 (PKVRLSLANE…MHISLEEPLG (91 aa)) form the Ig-like C1-type domain. The chain crosses the membrane as a helical span at residues 406–426 (TALGVIFASSLFLLALLFLGL). Topologically, residues 427–468 (QRRQAPTRVGLLQAERWKTTSCADTQSSHLHEDRTACVSQPS) are cytoplasmic.

As to quaternary structure, interacts with peptide-free HLA-A*02-B2M complexes or those loaded with low affinity peptides, likely facilitating peptide exchange onto higher affinity peptides. Interacts with MR1 in a ligand-independent way; this interaction may stabilize MR1 pool and facilitate ligand loading and dissociation.

Its subcellular location is the cell membrane. The protein resides in the endoplasmic reticulum membrane. The protein localises to the microsome membrane. It localises to the golgi apparatus membrane. Component of the antigen processing and presentation pathway, which binds to MHC class I coupled with beta2-microglobulin/B2M. Association between TAPBPR and MHC class I occurs in the absence of a functional peptide-loading complex (PLC). Expression seems to slow down and down-regulate MHC class I surface expression. The polypeptide is Tapasin-related protein (TAPBPL) (Pongo abelii (Sumatran orangutan)).